A 230-amino-acid chain; its full sequence is N-(5'-phosphoribosyl)anthranilate isomerase (230 aa).

The protein belongs to the TrpF family.

It carries out the reaction N-(5-phospho-beta-D-ribosyl)anthranilate = 1-(2-carboxyphenylamino)-1-deoxy-D-ribulose 5-phosphate. The protein operates within amino-acid biosynthesis; L-tryptophan biosynthesis; L-tryptophan from chorismate: step 3/5. The chain is N-(5'-phosphoribosyl)anthranilate isomerase from Syntrophus aciditrophicus (strain SB).